Consider the following 219-residue polypeptide: MKKRVYLIAAVVSGALAVSGCTTNPYTGEREAGKSAIGAGLGSLVGAGIGALSSSKKDRGKGALIGAAAGAALGGGVGYYMDVQEAKLRDKMRGTGVSVTRSGDNIILNMPNNVTFDSSSATLKPAGANTLTGVAMVLKEYPKTAVNVIGYTDSTGGHDLNMRLSQQRADSVASALITQGVDASRIRTQGLGPANPIASNSTAEGKAQNRRVEITLSPL.

Positions 1–20 are cleaved as a signal peptide; that stretch reads MKKRVYLIAAVVSGALAVSG. Residue C21 is the site of N-palmitoyl cysteine attachment. The S-diacylglycerol cysteine moiety is linked to residue C21. 2 helical membrane-spanning segments follow: residues 37-55 and 62-84; these read IGAG…LSSS and GALI…MDVQ. In terms of domain architecture, OmpA-like spans 103–219; that stretch reads GDNIILNMPN…RRVEITLSPL (117 aa).

Its subcellular location is the cell inner membrane. The protein localises to the cell outer membrane. Suppresses temperature-sensitive mutations in BamB when overexpressed. The polypeptide is Probable lipoprotein YiaD (yiaD) (Escherichia coli (strain K12)).